The sequence spans 214 residues: Oocyte zinc finger protein XlCOF10 (214 aa).

7 consecutive C2H2-type zinc fingers follow at residues 1 to 23 (FSCS…RQLH), 29 to 51 (FTCS…HRIH), 57 to 79 (FTCD…QKSH), 85 to 107 (FCCS…QRTH), 113 to 135 (FTCT…QKSH), 141 to 163 (FSCS…QRIH), and 169 to 191 (FSCS…EKCH).

Belongs to the krueppel C2H2-type zinc-finger protein family.

The protein resides in the nucleus. Its function is as follows. May be involved in transcriptional regulation. The polypeptide is Oocyte zinc finger protein XlCOF10 (Xenopus laevis (African clawed frog)).